The following is a 113-amino-acid chain: Protein ORF3 (113 aa).

Hydrophobic regions lie at residues methionine 1–cysteine 21 and alanine 32–leucine 52. Positions alanine 27 to leucine 67 are interaction with host HPX. The tract at residues valine 47–phenylalanine 71 is interaction with the capsid protein. A Phosphoserine; by host modification is found at serine 70. Residues phenylalanine 71 to arginine 113 are homodimerization, and interaction with host AMBP/bikunin. Residues proline 89–arginine 113 form a disordered region. An interaction with host SRC, HCK, FYN, PIK3R3 and GRB2 region spans residues serine 94–valine 103. Residues proline 95 to proline 98 carry the PTAP/PSAP motif motif.

The protein belongs to the hepevirus ORF3 protein family. In terms of assembly, forms homooligomers. Interacts with host SRC, HCK, FYN, PIK3R3 and GRB2 (via SH3 domain); binding does not activate the kinases. Interacts with host AMBP/bikunin and AMBP/alpha-1-microglobulin peptides. Interacts with host HPX/hemopexin. Interacts (when phosphorylated) with capsid protein ORF2. Interacts with host TSG101; this interaction plays a role in viral release from the host cell. Interacts with host SIRPA; this interaction down-regulates the phosphorylation of host IRF3. In terms of processing, palmitoylated in the N-terminus.

Its subcellular location is the host endoplasmic reticulum membrane. It is found in the host cytoplasm. The protein localises to the host cytoskeleton. It localises to the virion. The protein resides in the host cell membrane. Small multifunctional phosphoprotein involved in virion morphogenesis, egress and counteracting host innate immunity. Plays critical roles in the final steps of viral release by interacting with host TSG101, a member of the vacuolar protein-sorting pathway and using other cellular host proteins involved in vesicle formation pathway. Also acts as a viroporin and forms ion conductive pores allowing viral particle release. Impairs the generation of type I interferon by down-regulating host TLR3 and TLR7 as well as their downstream signaling pathways. Down-regulates the phosphorylation of host IRF3 via the interaction with host SIRP-alpha, thereby inhibiting IFN-I expression. Interacts with host microtubules. This Bandicota bengalensis (lesser bandicoot rat) protein is Protein ORF3.